A 261-amino-acid chain; its full sequence is GTP cyclohydrolase FolE2 (261 aa).

It belongs to the GTP cyclohydrolase IV family.

The enzyme catalyses GTP + H2O = 7,8-dihydroneopterin 3'-triphosphate + formate + H(+). Its pathway is cofactor biosynthesis; 7,8-dihydroneopterin triphosphate biosynthesis; 7,8-dihydroneopterin triphosphate from GTP: step 1/1. In terms of biological role, converts GTP to 7,8-dihydroneopterin triphosphate. The polypeptide is GTP cyclohydrolase FolE2 (Herminiimonas arsenicoxydans).